The sequence spans 240 residues: Uridylate kinase (240 aa).

K12 to G15 is an ATP binding site. The tract at residues G20 to G25 is involved in allosteric activation by GTP. G54 serves as a coordination point for UMP. G55 and R59 together coordinate ATP. UMP is bound by residues D74 and T135 to T142. ATP contacts are provided by Y168 and D171.

Belongs to the UMP kinase family. Homohexamer.

The protein localises to the cytoplasm. It catalyses the reaction UMP + ATP = UDP + ADP. It functions in the pathway pyrimidine metabolism; CTP biosynthesis via de novo pathway; UDP from UMP (UMPK route): step 1/1. Allosterically activated by GTP. Inhibited by UTP. Functionally, catalyzes the reversible phosphorylation of UMP to UDP. In Desulfitobacterium hafniense (strain Y51), this protein is Uridylate kinase.